Here is a 239-residue protein sequence, read N- to C-terminus: Ribosomal RNA small subunit methyltransferase G (239 aa).

S-adenosyl-L-methionine contacts are provided by residues glycine 78, phenylalanine 83, 129–130 (AE), and arginine 148.

It belongs to the methyltransferase superfamily. RNA methyltransferase RsmG family.

The protein localises to the cytoplasm. Functionally, specifically methylates the N7 position of a guanine in 16S rRNA. The sequence is that of Ribosomal RNA small subunit methyltransferase G from Desulfitobacterium hafniense (strain Y51).